We begin with the raw amino-acid sequence, 234 residues long: Orotidine 5'-phosphate decarboxylase (234 aa).

Substrate-binding positions include Asp10, Lys32, 59-68 (DLKFHDIPNT), Thr119, Arg180, Gln189, Gly209, and Arg210. Lys61 functions as the Proton donor in the catalytic mechanism.

The protein belongs to the OMP decarboxylase family. Type 1 subfamily. In terms of assembly, homodimer.

The catalysed reaction is orotidine 5'-phosphate + H(+) = UMP + CO2. It functions in the pathway pyrimidine metabolism; UMP biosynthesis via de novo pathway; UMP from orotate: step 2/2. Its function is as follows. Catalyzes the decarboxylation of orotidine 5'-monophosphate (OMP) to uridine 5'-monophosphate (UMP). This chain is Orotidine 5'-phosphate decarboxylase, found in Mannheimia succiniciproducens (strain KCTC 0769BP / MBEL55E).